Reading from the N-terminus, the 272-residue chain is D-aminoacyl-tRNA deacylase (272 aa).

Belongs to the DtdA deacylase family. As to quaternary structure, monomer. Zn(2+) is required as a cofactor.

It carries out the reaction a D-aminoacyl-tRNA + H2O = a tRNA + a D-alpha-amino acid + H(+). It catalyses the reaction glycyl-tRNA(Ala) + H2O = tRNA(Ala) + glycine + H(+). D-aminoacyl-tRNA deacylase with broad substrate specificity. By recycling D-aminoacyl-tRNA to D-amino acids and free tRNA molecules, this enzyme counteracts the toxicity associated with the formation of D-aminoacyl-tRNA entities in vivo. The sequence is that of D-aminoacyl-tRNA deacylase from Hyperthermus butylicus (strain DSM 5456 / JCM 9403 / PLM1-5).